The following is a 150-amino-acid chain: Ribosome maturation factor RimP (150 aa).

The protein belongs to the RimP family.

The protein localises to the cytoplasm. Required for maturation of 30S ribosomal subunits. The polypeptide is Ribosome maturation factor RimP (Francisella tularensis subsp. mediasiatica (strain FSC147)).